The sequence spans 471 residues: 3-isopropylmalate dehydratase large subunit (471 aa).

The [4Fe-4S] cluster site is built by C347, C407, and C410.

The protein belongs to the aconitase/IPM isomerase family. LeuC type 1 subfamily. In terms of assembly, heterodimer of LeuC and LeuD. It depends on [4Fe-4S] cluster as a cofactor.

It catalyses the reaction (2R,3S)-3-isopropylmalate = (2S)-2-isopropylmalate. The protein operates within amino-acid biosynthesis; L-leucine biosynthesis; L-leucine from 3-methyl-2-oxobutanoate: step 2/4. Catalyzes the isomerization between 2-isopropylmalate and 3-isopropylmalate, via the formation of 2-isopropylmaleate. The sequence is that of 3-isopropylmalate dehydratase large subunit from Acaryochloris marina (strain MBIC 11017).